Reading from the N-terminus, the 532-residue chain is METLEKNFKKEKSVFSAAKKKKNLSFAKNEKTTTLKDALQAGDILTVKITALGSKNIGVAELKNGYTVLVPNTKCGDKVQVKVEKIFLGKGTNSILNQKIKYVVARVDNSGTKTSNFEKTSNSLKFDFKVGQKFRVTIAKKGPKNSGLVPVAKNFLFIVPNTKVGENIVVEIQKIKQNYAFAKPILSKQMNVVQENNQMIGQQFHIVIPSSAKTIANSFVVKLNGQFVFVKKSLGVQLEDTVKIQIQKSTGTFALAKILKISPISSKEKKAMVKETVQKMIQSSMHFGEKAIRCNANMRKYIWYRKKGLGMYTNSKNTFVSIKETKKPMVKRGRHVLNVLKTQRCFAEALKQLAKYAAKGKTFLFVGTKKPAASLVAKTALLSNTSFFVNTRWLGGMLTNWKTILKSISQIRPILKQKQKILQKILEKREKIQRRLFNKVYLLRKKSQKFMIKGKYLIQQILRSKNFLIEKSQKFIQTKNALFSANALLLNASKNLKMKKIQILKQIQQLEFAAVEILKQKQPIKSFNSIKS.

The segment at 1 to 271 is N-terminal extension; the sequence is METLEKNFKK…SPISSKEKKA (271 aa). TRAM domains are found at residues 38-97, 127-186, and 197-260; these read ALQA…SILN, DFKV…KPIL, and NQMI…KILK.

Belongs to the universal ribosomal protein uS2 family.

The protein resides in the plastid. It localises to the chloroplast. This is Small ribosomal subunit protein uS2cz (rps2-1) from Tetradesmus obliquus (Green alga).